The primary structure comprises 553 residues: Putative ABC transporter ATP-binding protein BCE_3323 (553 aa).

ABC transporter domains are found at residues 7–245 (AEIN…FRPF) and 295–527 (LSAE…SINR). Residues 41–48 (GGSGSGKT) and 329–336 (GKNGTGKS) each bind ATP.

It belongs to the ABC transporter superfamily.

It is found in the cell membrane. Probably part of an ABC transporter complex. Responsible for energy coupling to the transport system. The chain is Putative ABC transporter ATP-binding protein BCE_3323 from Bacillus cereus (strain ATCC 10987 / NRS 248).